Consider the following 317-residue polypeptide: Porphobilinogen deaminase (317 aa).

S-(dipyrrolylmethanemethyl)cysteine is present on C245.

This sequence belongs to the HMBS family. Monomer. Requires dipyrromethane as cofactor.

The enzyme catalyses 4 porphobilinogen + H2O = hydroxymethylbilane + 4 NH4(+). Its pathway is porphyrin-containing compound metabolism; protoporphyrin-IX biosynthesis; coproporphyrinogen-III from 5-aminolevulinate: step 2/4. It participates in porphyrin-containing compound metabolism; chlorophyll biosynthesis. Tetrapolymerization of the monopyrrole PBG into the hydroxymethylbilane pre-uroporphyrinogen in several discrete steps. The protein is Porphobilinogen deaminase of Prochlorococcus marinus (strain MIT 9303).